The primary structure comprises 72 residues: Caerin-regulated peptide (72 aa).

A signal peptide spans 1–22 (MAFLKKSLLLVLFLGLVSLSIC). A propeptide spanning residues 23–43 (DEEKRENEDEEEQEDDEQSEE) is cleaved from the precursor. The segment at 24–46 (EEKRENEDEEEQEDDEQSEEKRG) is disordered. Acidic residues predominate over residues 30–41 (EDEEEQEDDEQS).

As to expression, expressed by the skin glands.

The protein localises to the secreted. In terms of biological role, has antibacterial activity against Gram-positive bacterium M.luteus NCT C2665 and against Gram-negative bacterium E.coli K12D31. This chain is Caerin-regulated peptide, found in Agalychnis callidryas (Red-eyed tree frog).